The chain runs to 672 residues: UvrABC system protein B (672 aa).

One can recognise a Helicase ATP-binding domain in the interval 26 to 181 (AGLEDGLAYQ…ILQRLAELQY (156 aa)). 39 to 46 (GVTGSGKT) lines the ATP pocket. The short motif at 92–115 (YYDYYQPEAYVPSSDTYIEKDASI) is the Beta-hairpin element. The 163-residue stretch at 430-592 (QVDDLLSEIK…ITPKSIQKAV (163 aa)) folds into the Helicase C-terminal domain. Residues 631 to 666 (AKELRKLEEQMYHHARNLEFEEAAAVRDKIQHIRKG) enclose the UVR domain.

Belongs to the UvrB family. In terms of assembly, forms a heterotetramer with UvrA during the search for lesions. Interacts with UvrC in an incision complex.

The protein localises to the cytoplasm. Functionally, the UvrABC repair system catalyzes the recognition and processing of DNA lesions. A damage recognition complex composed of 2 UvrA and 2 UvrB subunits scans DNA for abnormalities. Upon binding of the UvrA(2)B(2) complex to a putative damaged site, the DNA wraps around one UvrB monomer. DNA wrap is dependent on ATP binding by UvrB and probably causes local melting of the DNA helix, facilitating insertion of UvrB beta-hairpin between the DNA strands. Then UvrB probes one DNA strand for the presence of a lesion. If a lesion is found the UvrA subunits dissociate and the UvrB-DNA preincision complex is formed. This complex is subsequently bound by UvrC and the second UvrB is released. If no lesion is found, the DNA wraps around the other UvrB subunit that will check the other stand for damage. The protein is UvrABC system protein B of Coxiella burnetii (strain CbuK_Q154) (Coxiella burnetii (strain Q154)).